Consider the following 651-residue polypeptide: E3 SUMO-protein ligase PIAS1 (651 aa).

A2 carries the N-acetylalanine modification. The interval 2–200 (ADSAELKQMV…KCDFTVQVQL (199 aa)) is required for interaction with MSX1. In terms of domain architecture, SAP spans 11-45 (VMSLRVSELQVLLGYAGRNKHGRKHELLTKALHLL). The short motif at 19–23 (LQVLL) is the LXXLL motif element. Residues K40 and K46 each participate in a glycyl lysine isopeptide (Lys-Gly) (interchain with G-Cter in SUMO2) cross-link. The Nuclear localization signal motif lies at 56 to 64 (KIKELYRRR). The region spanning 124–288 (HLTSALHPVH…SMAVYLVKQL (165 aa)) is the PINIT domain. Residues K137 and K238 each participate in a glycyl lysine isopeptide (Lys-Gly) (interchain with G-Cter in SUMO2) cross-link. The segment at 320 to 405 (PDSEIATTSL…LKYCTDCDEI (86 aa)) adopts an SP-RING-type zinc-finger fold. Residues C351, H353, C374, and C377 each contribute to the Zn(2+) site. Positions 368–380 (KKPTWVCPVCDKK) match the Nuclear localization signal motif. K453 is covalently cross-linked (Glycyl lysine isopeptide (Lys-Gly) (interchain with G-Cter in SUMO2)). The interval 462 to 473 (LTIDSSSDEEEE) is SUMO1-binding. A disordered region spans residues 465 to 511 (DSSSDEEEEEPPAKRTCPSLSPTSPLSNKGILSLPHQASPVSRTPSL). 4 positions are modified to phosphoserine: S467, S468, S483, and S485. Residues 482-491 (PSLSPTSPLS) are compositionally biased toward low complexity. T487 bears the Phosphothreonine mark. Phosphoserine occurs at positions 488 and 491. A Glycyl lysine isopeptide (Lys-Gly) (interchain with G-Cter in SUMO2) cross-link involves residue K493. 3 positions are modified to phosphoserine: S503, S510, and S522. Tandem repeats lie at residues 520 to 523 (NTSL) and 557 to 560 (NTSL). The segment at 520–615 (NTSLIQDYRH…GSSSGSNSSL (96 aa)) is 4 X 4 AA repeats of N-T-S-L. A 3; approximate repeat occupies 598 to 601 (STSL). Residues 600-630 (SLPATNGSSSGSNSSLVSSNSLRESHGHGVA) are disordered. The segment covering 605-621 (NGSSSGSNSSLVSSNSL) has biased composition (low complexity). One copy of the 4; approximate repeat lies at 612-615 (NSSL).

Belongs to the PIAS family. As to quaternary structure, interacts with NR2C1; the interaction promotes its sumoylation. Interacts with DDX21, CSRP2, AXIN1, JUN, SATB2, PLAG1, TP53 and STAT1 (dimer), following IFNA1-stimulation. Interacts with SP3 (preferentially when SUMO-modified). Interacts with KLF8; the interaction results in SUMO ligation and repression of KLF8 transcriptional activity and of its cell cycle progression into G(1) phase. Interacts with CHUK/IKKA; this interaction induces PIAS1 phosphorylation. Interacts with PTK2/FAK1; the interaction promotes its sumoylation. Interacts with SUMO1, UBE2I, NCOA2 and AR. Interacts with NR2C1; the interaction promotes its sumoylation. Interacts with DDX5. Interacts with MTA1. Interacts with PML (isoform PML-12). Interacts with PRDM1. Interacts (via N-terminus) with MSX1 (via C-terminus); the interaction is required for the localization of both proteins to the nuclear periphery and specific binding of MSX1 to the core enhancer region in target gene promoters. Sumoylated. Expressed in kidney, heart, spleen, brain and cerebellum; weak expression, if any, in liver and lung.

It localises to the nucleus. Its subcellular location is the nucleus speckle. It is found in the PML body. The protein localises to the cytoplasm. The protein resides in the cytoskeleton. The catalysed reaction is S-ubiquitinyl-[E2 ubiquitin-conjugating enzyme]-L-cysteine + [acceptor protein]-L-lysine = [E2 ubiquitin-conjugating enzyme]-L-cysteine + N(6)-ubiquitinyl-[acceptor protein]-L-lysine.. It functions in the pathway protein modification; protein sumoylation. Its function is as follows. Functions as an E3-type small ubiquitin-like modifier (SUMO) ligase, stabilizing the interaction between UBE2I and the substrate, and as a SUMO-tethering factor. Catalyzes sumoylation of various proteins, such as CEBPB, MRE11, MTA1, PTK2 and PML. Plays a crucial role as a transcriptional coregulation in various cellular pathways, including the STAT pathway, the p53 pathway and the steroid hormone signaling pathway. In vitro, binds A/T-rich DNA. The effects of this transcriptional coregulation, transactivation or silencing, may vary depending upon the biological context. Mediates sumoylation of MRE11, stabilizing MRE11 on chromatin during end resection. Sumoylates PML (at 'Lys-65' and 'Lys-160') and PML-RAR and promotes their ubiquitin-mediated degradation. PIAS1-mediated sumoylation of PML promotes its interaction with CSNK2A1/CK2 which in turn promotes PML phosphorylation and degradation. Enhances the sumoylation of MTA1 and may participate in its paralog-selective sumoylation. Plays a dynamic role in adipogenesis by promoting the SUMOylation and degradation of CEBPB. Mediates the nuclear mobility and localization of MSX1 to the nuclear periphery, whereby MSX1 is brought into the proximity of target myoblast differentiation factor genes. Also required for the binding of MSX1 to the core enhancer region in target gene promoter regions, independent of its sumoylation activity. Capable of binding to the core enhancer region TAAT box in the MYOD1 gene promoter. The chain is E3 SUMO-protein ligase PIAS1 (Pias1) from Mus musculus (Mouse).